The following is a 181-amino-acid chain: Putative ankyrin repeat protein RF_0782 (181 aa).

ANK repeat units lie at residues 24–53 (YHYSPLATAASVGSVEIVEALLSKGADINF) and 54–83 (GSTPSFITAIKNGHLKICYLLKALGANTQI).

The chain is Putative ankyrin repeat protein RF_0782 from Rickettsia felis (strain ATCC VR-1525 / URRWXCal2) (Rickettsia azadi).